Consider the following 172-residue polypeptide: GTP-dependent dephospho-CoA kinase (172 aa).

5 residues coordinate GTP: D40, V41, V42, D59, and E112.

This sequence belongs to the GTP-dependent DPCK family.

The enzyme catalyses 3'-dephospho-CoA + GTP = GDP + CoA + H(+). The protein operates within cofactor biosynthesis; coenzyme A biosynthesis. Catalyzes the GTP-dependent phosphorylation of the 3'-hydroxyl group of dephosphocoenzyme A to form coenzyme A (CoA). In Methanospirillum hungatei JF-1 (strain ATCC 27890 / DSM 864 / NBRC 100397 / JF-1), this protein is GTP-dependent dephospho-CoA kinase.